Reading from the N-terminus, the 63-residue chain is MIKQELRDKDTKELHIELLGLFREQFNLRMQAASGQLQQTHLLKKVRNKIARVKTLLTDNTGV.

It belongs to the universal ribosomal protein uL29 family.

This Baumannia cicadellinicola subsp. Homalodisca coagulata protein is Large ribosomal subunit protein uL29.